Consider the following 63-residue polypeptide: Large ribosomal subunit protein uL30 (63 aa).

The protein belongs to the universal ribosomal protein uL30 family. Part of the 50S ribosomal subunit.

This chain is Large ribosomal subunit protein uL30, found in Rickettsia typhi (strain ATCC VR-144 / Wilmington).